A 522-amino-acid chain; its full sequence is Man(5)GlcNAc(2)-PP-dolichol translocation protein RFT1 (522 aa).

A run of 10 helical transmembrane segments spans residues 35-55 (DVLG…LFLT), 75-95 (LLWL…YLWY), 108-128 (VLLS…FSVI), 143-165 (FAIG…LFMF), 177-197 (AQYI…YIYI), 322-342 (VVGV…PVVI), 354-374 (GGAL…INGI), 400-420 (IIHL…GFIV), 457-477 (TSIF…LFAT), and 479-499 (PGLS…ILTA).

It belongs to the RFT1 family.

The protein localises to the endoplasmic reticulum membrane. It participates in protein modification; protein glycosylation. Intramembrane glycolipid transporter that operates in the biosynthetic pathway of dolichol-linked oligosaccharides, the glycan precursors employed in protein asparagine (N)-glycosylation. The sequential addition of sugars to dolichol pyrophosphate produces dolichol-linked oligosaccharides containing fourteen sugars, including two GlcNAcs, nine mannoses and three glucoses. Once assembled, the oligosaccharide is transferred from the lipid to nascent proteins by oligosaccharyltransferases. The assembly of dolichol-linked oligosaccharides begins on the cytosolic side of the endoplasmic reticulum membrane and finishes in its lumen. RFT1 could mediate the translocation of the cytosolically oriented intermediate DolPP-GlcNAc2Man5, produced by ALG11, into the ER lumen where dolichol-linked oligosaccharides assembly continues. However, the intramembrane lipid transporter activity could not be confirmed in vitro. The protein is Man(5)GlcNAc(2)-PP-dolichol translocation protein RFT1 of Caenorhabditis elegans.